Consider the following 569-residue polypeptide: Urease subunit alpha (569 aa).

The region spanning 131–569 (GSIDTHIHFI…VPMAQRYFLL (439 aa)) is the Urease domain. His-136, His-138, and Lys-219 together coordinate Ni(2+). The residue at position 219 (Lys-219) is an N6-carboxylysine. Position 221 (His-221) interacts with substrate. Ni(2+) is bound by residues His-248 and His-274. Catalysis depends on His-322, which acts as the Proton donor. Asp-362 provides a ligand contact to Ni(2+).

The protein belongs to the metallo-dependent hydrolases superfamily. Urease alpha subunit family. Heterotrimer of UreA (gamma), UreB (beta) and UreC (alpha) subunits. Three heterotrimers associate to form the active enzyme. The cofactor is Ni cation. In terms of processing, carboxylation allows a single lysine to coordinate two nickel ions.

Its subcellular location is the cytoplasm. It carries out the reaction urea + 2 H2O + H(+) = hydrogencarbonate + 2 NH4(+). It functions in the pathway nitrogen metabolism; urea degradation; CO(2) and NH(3) from urea (urease route): step 1/1. The sequence is that of Urease subunit alpha from Prochlorococcus marinus (strain MIT 9215).